The primary structure comprises 279 residues: Energy-coupling factor transporter ATP-binding protein EcfA (279 aa).

The region spanning 5 to 240 is the ABC transporter domain; that stretch reads IELEKINYKY…GPELIDLGLD (236 aa). An ATP-binding site is contributed by 40–47; that stretch reads GHNGSGKS.

This sequence belongs to the ABC transporter superfamily. Energy-coupling factor EcfA family. As to quaternary structure, forms a stable energy-coupling factor (ECF) transporter complex composed of 2 membrane-embedded substrate-binding proteins (S component), 2 ATP-binding proteins (A component) and 2 transmembrane proteins (T component).

It is found in the cell membrane. ATP-binding (A) component of a common energy-coupling factor (ECF) ABC-transporter complex. Unlike classic ABC transporters this ECF transporter provides the energy necessary to transport a number of different substrates. The polypeptide is Energy-coupling factor transporter ATP-binding protein EcfA (Enterococcus faecium (Streptococcus faecium)).